The sequence spans 134 residues: D-ribose pyranase (134 aa).

Residue histidine 20 is the Proton donor of the active site. Substrate is bound by residues aspartate 28, histidine 101, and 123-125 (YCN).

The protein belongs to the RbsD / FucU family. RbsD subfamily. In terms of assembly, homodecamer.

It is found in the cytoplasm. It catalyses the reaction beta-D-ribopyranose = beta-D-ribofuranose. It functions in the pathway carbohydrate metabolism; D-ribose degradation; D-ribose 5-phosphate from beta-D-ribopyranose: step 1/2. Its function is as follows. Catalyzes the interconversion of beta-pyran and beta-furan forms of D-ribose. This is D-ribose pyranase from Pseudomonas fluorescens (strain ATCC BAA-477 / NRRL B-23932 / Pf-5).